The following is a 271-amino-acid chain: 3-methyl-2-oxobutanoate hydroxymethyltransferase (271 aa).

Asp-53 and Asp-92 together coordinate Mg(2+). Residues 53-54 (DS), Asp-92, and Lys-120 each bind 3-methyl-2-oxobutanoate. A Mg(2+)-binding site is contributed by Glu-122. Glu-189 acts as the Proton acceptor in catalysis.

This sequence belongs to the PanB family. As to quaternary structure, homodecamer; pentamer of dimers. The cofactor is Mg(2+).

It localises to the cytoplasm. It catalyses the reaction 3-methyl-2-oxobutanoate + (6R)-5,10-methylene-5,6,7,8-tetrahydrofolate + H2O = 2-dehydropantoate + (6S)-5,6,7,8-tetrahydrofolate. It functions in the pathway cofactor biosynthesis; (R)-pantothenate biosynthesis; (R)-pantoate from 3-methyl-2-oxobutanoate: step 1/2. Its function is as follows. Catalyzes the reversible reaction in which hydroxymethyl group from 5,10-methylenetetrahydrofolate is transferred onto alpha-ketoisovalerate to form ketopantoate. The sequence is that of 3-methyl-2-oxobutanoate hydroxymethyltransferase from Burkholderia multivorans (strain ATCC 17616 / 249).